The chain runs to 488 residues: Cysteine--tRNA ligase (488 aa).

Cys-29 contacts Zn(2+). The 'HIGH' region motif lies at 31–41 (ATVQGMPHVGH). The Zn(2+) site is built by Cys-227, His-252, and Glu-256. The 'KMSKS' region motif lies at 283-287 (KMSKS). Lys-286 serves as a coordination point for ATP.

This sequence belongs to the class-I aminoacyl-tRNA synthetase family. Monomer. Zn(2+) serves as cofactor.

The protein resides in the cytoplasm. It catalyses the reaction tRNA(Cys) + L-cysteine + ATP = L-cysteinyl-tRNA(Cys) + AMP + diphosphate. The sequence is that of Cysteine--tRNA ligase from Pseudarthrobacter chlorophenolicus (strain ATCC 700700 / DSM 12829 / CIP 107037 / JCM 12360 / KCTC 9906 / NCIMB 13794 / A6) (Arthrobacter chlorophenolicus).